The chain runs to 142 residues: Protein archease (142 aa).

Positions 12, 141, and 142 each coordinate Ca(2+).

The protein belongs to the archease family.

Activates the tRNA-splicing ligase complex by facilitating the enzymatic turnover of catalytic subunit RtcB. Acts by promoting the guanylylation of RtcB, a key intermediate step in tRNA ligation. Can also alter the NTP specificity of RtcB such that ATP, dGTP or ITP is used efficiently. In Pyrococcus furiosus (strain ATCC 43587 / DSM 3638 / JCM 8422 / Vc1), this protein is Protein archease.